We begin with the raw amino-acid sequence, 124 residues long: Fluoride-specific ion channel FluC (124 aa).

Helical transmembrane passes span Leu4–Phe24, Phe35–Gly55, Pro62–Phe82, and Ile102–Ser122. The Na(+) site is built by Gly74 and Thr77.

The protein belongs to the fluoride channel Fluc/FEX (TC 1.A.43) family.

It localises to the cell inner membrane. The catalysed reaction is fluoride(in) = fluoride(out). With respect to regulation, na(+) is not transported, but it plays an essential structural role and its presence is essential for fluoride channel function. Fluoride-specific ion channel. Important for reducing fluoride concentration in the cell, thus reducing its toxicity. The chain is Fluoride-specific ion channel FluC from Shewanella loihica (strain ATCC BAA-1088 / PV-4).